Consider the following 1249-residue polypeptide: Apoptotic protease-activating factor 1 (1249 aa).

The CARD domain occupies Met1–Gly90. The 310-residue stretch at Asn106–Leu415 folds into the NB-ARC domain. Residues Gly154–Ser161 and Arg265 each bind ATP. A WD 1-1 repeat occupies Pro613–Asp652. The WD 1-2 repeat unit spans residues Ala655–Thr694. One copy of the WD 1-3 repeat lies at Glu697–Thr738. The stretch at Gly741–Ser780 is one WD 1-4 repeat. The stretch at Asp796–Thr837 is one WD 1-5 repeat. One copy of the WD 1-6 repeat lies at Gly838–Asp877. A WD 1-7 repeat occupies Gly880–Glu910. The interval Glu910–Val921 is interpropeller linker. Residues Leu922 to Tyr958 form a WD 2-1 repeat. A WD 2-2 repeat occupies Leu959 to Ser998. One copy of the WD 2-3 repeat lies at Gly1001 to Leu1040. The WD 2-4 repeat unit spans residues Ala1042–Asp1080. A WD 2-5 repeat occupies Cys1083–Glu1122. One copy of the WD 2-6 repeat lies at Gly1125 to Leu1164. The WD 2-7 repeat unit spans residues Thr1176–Thr1213. One copy of the WD 2-8 repeat lies at Phe1214–Glu1249.

As to quaternary structure, monomer. Oligomerizes to a heptameric ring, known as the apoptosome, upon binding of cytochrome c and dATP. Oligomeric Apaf-1 and pro-caspase-9 bind to each other via their respective NH2-terminal CARD domains. Interacts with UACA. Interacts with APIP. Interacts (via CARD and NACHT domains) with NAIP/BIRC1 (via NACHT domain). Interacts with CIAO2A.

Its subcellular location is the cytoplasm. In terms of biological role, regulates programmed cell death; necessary for normal brain development. Participates with pro-caspase-9 (Apaf-3) in the cytochrome c-dependent activation of caspase-3, leading to apoptosis. This activation requires ATP. The protein is Apoptotic protease-activating factor 1 (Apaf1) of Rattus norvegicus (Rat).